The sequence spans 497 residues: MAKYIMAFDQGTTSSRAIIFDRSGKIIASLNQEFKQIYPKAGWVEHDPMEIWGTQIGVAKGVIEKAGINPEDIAAIGITNQRETTVVWDKNTGKPIYNAIVWQCRRTAPICDELKNKGFDKKIREKTGLVVDAYFSGTKIKWILDNVEGAREKAEKGELLFGNIDTWLIWNLTRGKVHVTDYSNASRTMIFNIHELKWDKEILAELNIPEQMLPEVKPSSYVYGYTDKSIFGVEIPIAGDAGDQQAALFGQACFKPGMAKNTYGTGCFMLMNTGEKAVPSNTGLLTTIAWGIDGKVEYALEGSIFIAGAAIQWLRDELRIIDNSPQSEEYAMKVEDTNGVYVVPAFVGLGAPYWDMYARGTIVGLTRGAKREHIIRATLESIAYQTRDVLEAMQEDSGIRLQALKVDGGASANNFLMQFQSDILGVPVDRPQVIETTALGASYLAGLAVGFWNSREEIEKNWNVDKHFEPAMDNEKREKLYKGWKKAVERAMKWAEE.

An ADP-binding site is contributed by Thr-12. Thr-12, Thr-13, and Ser-14 together coordinate ATP. Thr-12 contacts sn-glycerol 3-phosphate. Position 16 (Arg-16) interacts with ADP. 4 residues coordinate sn-glycerol 3-phosphate: Arg-82, Glu-83, Tyr-134, and Asp-243. Residues Arg-82, Glu-83, Tyr-134, Asp-243, and Gln-244 each coordinate glycerol. 2 residues coordinate ADP: Thr-265 and Gly-308. ATP-binding residues include Thr-265, Gly-308, Gln-312, and Gly-409. Residues Gly-409 and Asn-413 each contribute to the ADP site.

It belongs to the FGGY kinase family. Homotetramer and homodimer (in equilibrium).

The catalysed reaction is glycerol + ATP = sn-glycerol 3-phosphate + ADP + H(+). It participates in polyol metabolism; glycerol degradation via glycerol kinase pathway; sn-glycerol 3-phosphate from glycerol: step 1/1. Its activity is regulated as follows. Activated by phosphorylation and inhibited by fructose 1,6-bisphosphate (FBP). Key enzyme in the regulation of glycerol uptake and metabolism. Catalyzes the phosphorylation of glycerol to yield sn-glycerol 3-phosphate. The sequence is that of Glycerol kinase from Thermoanaerobacter pseudethanolicus (strain ATCC 33223 / 39E) (Clostridium thermohydrosulfuricum).